The following is a 298-amino-acid chain: N-acetylmuramic acid 6-phosphate etherase (298 aa).

Positions 55-218 (IHAQVSGGGR…STGLMIKSGK (164 aa)) constitute an SIS domain. Glu83 acts as the Proton donor in catalysis. Glu114 is an active-site residue.

This sequence belongs to the GCKR-like family. MurNAc-6-P etherase subfamily. In terms of assembly, homodimer.

It carries out the reaction N-acetyl-D-muramate 6-phosphate + H2O = N-acetyl-D-glucosamine 6-phosphate + (R)-lactate. It functions in the pathway amino-sugar metabolism; 1,6-anhydro-N-acetylmuramate degradation. Its pathway is amino-sugar metabolism; N-acetylmuramate degradation. It participates in cell wall biogenesis; peptidoglycan recycling. Its function is as follows. Specifically catalyzes the cleavage of the D-lactyl ether substituent of MurNAc 6-phosphate, producing GlcNAc 6-phosphate and D-lactate. Together with AnmK, is also required for the utilization of anhydro-N-acetylmuramic acid (anhMurNAc) either imported from the medium or derived from its own cell wall murein, and thus plays a role in cell wall recycling. This is N-acetylmuramic acid 6-phosphate etherase from Escherichia coli O81 (strain ED1a).